A 374-amino-acid chain; its full sequence is Centrosomal protein of 41 kDa (374 aa).

The 98-residue stretch at 176 to 273 folds into the Rhodanese domain; it reads PDCPYLLLDV…VAQKFPEGMT (98 aa). Disordered stretches follow at residues 279–301 and 329–374; these read ISCL…QTSQ and ETSS…RPWK. Residues 329 to 349 are compositionally biased toward low complexity; it reads ETSSRLSSRMSTSSARSKAST.

It belongs to the CEP41 family. Expressed in various ciliary organs, including Kupffer's vesicle, ear and heart, as well as brain and kidney.

It localises to the cytoplasm. The protein resides in the cytoskeleton. The protein localises to the microtubule organizing center. It is found in the centrosome. Its subcellular location is the cell projection. It localises to the cilium. The protein resides in the cilium basal body. Functionally, required during ciliogenesis for tubulin glutamylation in cilium. Probably acts by participating in the transport of tubulin polyglutamylases between the basal body and the cilium. The protein is Centrosomal protein of 41 kDa (cep41) of Danio rerio (Zebrafish).